The primary structure comprises 119 residues: Small ribosomal subunit protein uS10 (119 aa).

Belongs to the universal ribosomal protein uS10 family. In terms of assembly, component of the 40S small ribosomal subunit.

The protein localises to the cytoplasm. Functionally, component of the small ribosomal subunit. The ribosome is a large ribonucleoprotein complex responsible for the synthesis of proteins in the cell. The polypeptide is Small ribosomal subunit protein uS10 (rps20) (Xenopus laevis (African clawed frog)).